Reading from the N-terminus, the 340-residue chain is 4-hydroxy-2-oxovalerate aldolase (340 aa).

Positions 4–255 (VVIHDPTLRD…ATGIDLYALL (252 aa)) constitute a Pyruvate carboxyltransferase domain. 12-13 (RD) provides a ligand contact to substrate. Asp-13 provides a ligand contact to Mn(2+). His-16 acts as the Proton acceptor in catalysis. Substrate-binding residues include Ser-166 and His-194. Residues His-194 and His-196 each contribute to the Mn(2+) site.

Belongs to the 4-hydroxy-2-oxovalerate aldolase family.

It carries out the reaction (S)-4-hydroxy-2-oxopentanoate = acetaldehyde + pyruvate. The polypeptide is 4-hydroxy-2-oxovalerate aldolase (Streptomyces griseus subsp. griseus (strain JCM 4626 / CBS 651.72 / NBRC 13350 / KCC S-0626 / ISP 5235)).